A 96-amino-acid polypeptide reads, in one-letter code: Small ribosomal subunit protein bS16 (96 aa).

Belongs to the bacterial ribosomal protein bS16 family.

This Oenococcus oeni (strain ATCC BAA-331 / PSU-1) protein is Small ribosomal subunit protein bS16.